The sequence spans 462 residues: A-type ATP synthase subunit B (462 aa).

This sequence belongs to the ATPase alpha/beta chains family. In terms of assembly, has multiple subunits with at least A(3), B(3), C, D, E, F, H, I and proteolipid K(x).

The protein resides in the cell membrane. Its function is as follows. Component of the A-type ATP synthase that produces ATP from ADP in the presence of a proton gradient across the membrane. The B chain is a regulatory subunit. The chain is A-type ATP synthase subunit B from Methanococcus maripaludis (strain C6 / ATCC BAA-1332).